Here is a 298-residue protein sequence, read N- to C-terminus: Tryptophan 2,3-dioxygenase (298 aa).

Substrate contacts are provided by residues 51-55 (FIIQH), Tyr113, and Arg117. Heme is bound at residue His240. Thr254 is a binding site for substrate.

The protein belongs to the tryptophan 2,3-dioxygenase family. In terms of assembly, homotetramer. Heme is required as a cofactor.

It carries out the reaction L-tryptophan + O2 = N-formyl-L-kynurenine. It functions in the pathway amino-acid degradation; L-tryptophan degradation via kynurenine pathway; L-kynurenine from L-tryptophan: step 1/2. Its function is as follows. Heme-dependent dioxygenase that catalyzes the oxidative cleavage of the L-tryptophan (L-Trp) pyrrole ring and converts L-tryptophan to N-formyl-L-kynurenine. Catalyzes the oxidative cleavage of the indole moiety. This Xanthomonas euvesicatoria pv. vesicatoria (strain 85-10) (Xanthomonas campestris pv. vesicatoria) protein is Tryptophan 2,3-dioxygenase.